The sequence spans 329 residues: DNA-directed RNA polymerase subunit alpha (329 aa).

Residues 1–234 (MQGSVTEFLK…EQLDAFVELR (234 aa)) form an alpha N-terminal domain (alpha-NTD) region. Residues 248–329 (FDPILLRPVD…WPPASLADDL (82 aa)) form an alpha C-terminal domain (alpha-CTD) region.

This sequence belongs to the RNA polymerase alpha chain family. As to quaternary structure, homodimer. The RNAP catalytic core consists of 2 alpha, 1 beta, 1 beta' and 1 omega subunit. When a sigma factor is associated with the core the holoenzyme is formed, which can initiate transcription.

The enzyme catalyses RNA(n) + a ribonucleoside 5'-triphosphate = RNA(n+1) + diphosphate. DNA-dependent RNA polymerase catalyzes the transcription of DNA into RNA using the four ribonucleoside triphosphates as substrates. The protein is DNA-directed RNA polymerase subunit alpha of Shewanella baltica (strain OS155 / ATCC BAA-1091).